The chain runs to 209 residues: Uracil phosphoribosyltransferase (209 aa).

5-phospho-alpha-D-ribose 1-diphosphate contacts are provided by residues Arg79, Arg104, and 131–139; that span reads DPMLATGGS. Uracil is bound by residues Ile194 and 199–201; that span reads GDA. A 5-phospho-alpha-D-ribose 1-diphosphate-binding site is contributed by Asp200.

The protein belongs to the UPRTase family. Requires Mg(2+) as cofactor.

The catalysed reaction is UMP + diphosphate = 5-phospho-alpha-D-ribose 1-diphosphate + uracil. Its pathway is pyrimidine metabolism; UMP biosynthesis via salvage pathway; UMP from uracil: step 1/1. Its activity is regulated as follows. Allosterically activated by GTP. In terms of biological role, catalyzes the conversion of uracil and 5-phospho-alpha-D-ribose 1-diphosphate (PRPP) to UMP and diphosphate. The protein is Uracil phosphoribosyltransferase of Geobacter sulfurreducens (strain ATCC 51573 / DSM 12127 / PCA).